A 109-amino-acid polypeptide reads, in one-letter code: MKVIHGIRVYEKGEKVFFETEMPSIPEYMYSKFGWKIIEIDGKNYWAPMEEEEYIHIVAKYLGISPSEVDLNLVHCGTMGDNGCFGDCTGNRFCKRWSTGDSTGCICGA.

This is an uncharacterized protein from Bacillus subtilis (strain 168).